A 160-amino-acid polypeptide reads, in one-letter code: MFRGKFETTIDVKGRTSLPAKFRDVLFETFGDERFFITNSNPVRLGEGVYSSGLVVYPYKEWLALEEKLMVGTGLGLSSAELAAVKRRIVAPAIECVADKLGRVLVPPHLRKSAVLEREILFVGMLNKAEIWSQAEWEKVCRQDEQNFPIDSPVLAELGL.

2 SpoVT-AbrB domains span residues K5–Y50 and A93–E136.

The protein belongs to the MraZ family. In terms of assembly, forms oligomers.

It is found in the cytoplasm. Its subcellular location is the nucleoid. The sequence is that of Transcriptional regulator MraZ from Geotalea uraniireducens (strain Rf4) (Geobacter uraniireducens).